A 320-amino-acid chain; its full sequence is MDYRKIIKEIGRGKNHARDLDRDTARGLYAHMLNGEVPDLELGGVLIALRIKGEGEAEMLGFYEAMQNHTIKLTPPAGKPMPIVIPSYNGARKQANLTPLLAILLHKLGFPVVVHGVSEDPTRVLTETIFELMGITPTLHGGQAQAKLDEHQPVFMPVGAFCPPLEKQLAMRWRMGVRNSAHTLAKLATPFAEGEALRLSSVSHPEYIGRVAKFFSDIGGRALLMHGTEGEVYANPQRCPQINLIDREGMRVLYEKQDTAGSELLPQAKDPETTAQWIERCLAGSEPIPESLKIQMACCLVATGEAATISDGLARVNQAF.

This sequence belongs to the anthranilate phosphoribosyltransferase family.

This is an uncharacterized protein from Escherichia coli (strain K12).